Reading from the N-terminus, the 185-residue chain is Ribosome-recycling factor (185 aa).

This sequence belongs to the RRF family.

Its subcellular location is the cytoplasm. Responsible for the release of ribosomes from messenger RNA at the termination of protein biosynthesis. May increase the efficiency of translation by recycling ribosomes from one round of translation to another. The polypeptide is Ribosome-recycling factor (Streptococcus suis (strain 98HAH33)).